The chain runs to 394 residues: MSKEKFQRTKPHVNVGTIGHVDHGKTTLTAAITTVLAKAYGGSARAFDQIDNAPEEKARGITINTSHVEYDTPTRHYAHVDCPGHADYVKNMITGAAQMDGAILVVAATDGPMPQTREHILLGRQVGVPYIIVFMNKCDMVDDEELLELVEMEVRELLSQYDFPGDDTPVIRGSALKALEGDEAWTAKIIELAEALDSYIPEPERAIDKPFLLPIEDVFSISGRGTVVTGRVERGIVKVGEEVEIVGIKDTTKTTCTGVEMFRKLLDEGRAGENVGVLLRGTKRDDVERGQVLAKPGSIKPHTQFESEVYILSKDEGGRHTPFFKGYRPQFYFRTTDVTGTIELPEGVEMVMPGDNIKMVVNLIAPIAMDDGLRFAIREGGRTVGAGVVAKVIA.

The tr-type G domain maps to 10–204 (KPHVNVGTIG…ALDSYIPEPE (195 aa)). The segment at 19 to 26 (GHVDHGKT) is G1. 19-26 (GHVDHGKT) is a binding site for GTP. Residue Thr-26 coordinates Mg(2+). A G2 region spans residues 60–64 (GITIN). The segment at 81–84 (DCPG) is G3. GTP-binding positions include 81–85 (DCPGH) and 136–139 (NKCD). Residues 136–139 (NKCD) form a G4 region. The G5 stretch occupies residues 174–176 (SAL).

It belongs to the TRAFAC class translation factor GTPase superfamily. Classic translation factor GTPase family. EF-Tu/EF-1A subfamily. As to quaternary structure, monomer.

It localises to the cytoplasm. It carries out the reaction GTP + H2O = GDP + phosphate + H(+). GTP hydrolase that promotes the GTP-dependent binding of aminoacyl-tRNA to the A-site of ribosomes during protein biosynthesis. In Sodalis glossinidius (strain morsitans), this protein is Elongation factor Tu.